Consider the following 267-residue polypeptide: 4-hydroxy-tetrahydrodipicolinate reductase (267 aa).

10-15 (GANGRM) is a binding site for NAD(+). NADP(+) is bound at residue Arg37. NAD(+) contacts are provided by residues 98–100 (GTT) and 122–125 (ARNY). The active-site Proton donor/acceptor is His155. His156 lines the (S)-2,3,4,5-tetrahydrodipicolinate pocket. Lys159 (proton donor) is an active-site residue. 165 to 166 (GT) provides a ligand contact to (S)-2,3,4,5-tetrahydrodipicolinate.

It belongs to the DapB family.

It is found in the cytoplasm. The enzyme catalyses (S)-2,3,4,5-tetrahydrodipicolinate + NAD(+) + H2O = (2S,4S)-4-hydroxy-2,3,4,5-tetrahydrodipicolinate + NADH + H(+). The catalysed reaction is (S)-2,3,4,5-tetrahydrodipicolinate + NADP(+) + H2O = (2S,4S)-4-hydroxy-2,3,4,5-tetrahydrodipicolinate + NADPH + H(+). The protein operates within amino-acid biosynthesis; L-lysine biosynthesis via DAP pathway; (S)-tetrahydrodipicolinate from L-aspartate: step 4/4. In terms of biological role, catalyzes the conversion of 4-hydroxy-tetrahydrodipicolinate (HTPA) to tetrahydrodipicolinate. The polypeptide is 4-hydroxy-tetrahydrodipicolinate reductase (Pseudoalteromonas translucida (strain TAC 125)).